A 934-amino-acid polypeptide reads, in one-letter code: Sorting nexin-14 (934 aa).

2 helical membrane passes run Y27–Y47 and L48–L68. In terms of domain architecture, PXA spans P129–P303. The 133-residue stretch at D335–L467 folds into the RGS domain. A PX domain is found at W557–S677.

This sequence belongs to the sorting nexin family.

It is found in the lysosome membrane. The protein localises to the late endosome membrane. Its subcellular location is the cell projection. It localises to the dendrite. Plays a role in maintaining normal neuronal excitability and synaptic transmission. May be involved in several stages of intracellular trafficking. Required for autophagosome clearance, possibly by mediating the fusion of lysosomes with autophagosomes. Binds phosphatidylinositol 3,5-bisphosphate (PtdIns(3,5)P2), a key component of late endosomes/lysosomes. Does not bind phosphatidylinositol 3-phosphate (PtdIns(3P)). This is Sorting nexin-14 from Danio rerio (Zebrafish).